The chain runs to 195 residues: Imidazoleglycerol-phosphate dehydratase (195 aa).

This sequence belongs to the imidazoleglycerol-phosphate dehydratase family.

Its subcellular location is the cytoplasm. It carries out the reaction D-erythro-1-(imidazol-4-yl)glycerol 3-phosphate = 3-(imidazol-4-yl)-2-oxopropyl phosphate + H2O. The protein operates within amino-acid biosynthesis; L-histidine biosynthesis; L-histidine from 5-phospho-alpha-D-ribose 1-diphosphate: step 6/9. The polypeptide is Imidazoleglycerol-phosphate dehydratase (Geobacter sp. (strain M21)).